The sequence spans 407 residues: Tyrosine--tRNA ligase (407 aa).

Tyr-35 serves as a coordination point for L-tyrosine. The 'HIGH' region motif lies at 40–49 (PTADSLHVGH). Residues Tyr-168 and Gln-172 each coordinate L-tyrosine. A 'KMSKS' region motif is present at residues 228-232 (KMGKT). Position 231 (Lys-231) interacts with ATP. The S4 RNA-binding domain occupies 341–405 (NLLVDLLVKC…RGKKNFNRIV (65 aa)).

This sequence belongs to the class-I aminoacyl-tRNA synthetase family. TyrS type 1 subfamily. As to quaternary structure, homodimer.

It is found in the cytoplasm. The catalysed reaction is tRNA(Tyr) + L-tyrosine + ATP = L-tyrosyl-tRNA(Tyr) + AMP + diphosphate + H(+). Its function is as follows. Catalyzes the attachment of tyrosine to tRNA(Tyr) in a two-step reaction: tyrosine is first activated by ATP to form Tyr-AMP and then transferred to the acceptor end of tRNA(Tyr). The chain is Tyrosine--tRNA ligase from Clostridium botulinum (strain Kyoto / Type A2).